The primary structure comprises 150 residues: Transthyretin (150 aa).

The N-terminal stretch at 1 to 20 is a signal peptide; that stretch reads MASYRLLLLCLAGLVFVSEA. C30 is subject to Sulfocysteine. K35 is an L-thyroxine binding site. Residue E62 is modified to 4-carboxyglutamate. E74 lines the L-thyroxine pocket. N118 carries N-linked (GlcNAc...) asparagine glycosylation. S137 is an L-thyroxine binding site.

This sequence belongs to the transthyretin family. In terms of assembly, homotetramer. Dimer of dimers. In the homotetramer, subunits assemble around a central channel that can accommodate two ligand molecules. Interacts with RBP4. In terms of processing, sulfonation of the reactive cysteine Cys-30 enhances the stability of the native conformation of TTR, avoiding misassembly of the protein leading to amyloid formation. Detected in plasma and cerebrospinal fluid (at protein level). Highly expressed in the choroid plexus. Detected in liver.

The protein resides in the secreted. Its function is as follows. Thyroid hormone-binding protein. Probably transports thyroxine from the bloodstream to the brain. This is Transthyretin (TTR) from Sus scrofa (Pig).